The sequence spans 142 residues: Putative pre-16S rRNA nuclease (142 aa).

This sequence belongs to the YqgF nuclease family.

It localises to the cytoplasm. Functionally, could be a nuclease involved in processing of the 5'-end of pre-16S rRNA. This Nitratidesulfovibrio vulgaris (strain DSM 19637 / Miyazaki F) (Desulfovibrio vulgaris) protein is Putative pre-16S rRNA nuclease.